The primary structure comprises 437 residues: Immunoglobulin superfamily member 11 (437 aa).

An N-terminal signal peptide occupies residues 1 to 22 (MTCRGSPLAPLLLFSLHGVAAS). The 114-residue stretch at 23-136 (LEVSESPGSV…DRGGRNIGVT (114 aa)) folds into the Ig-like V-type domain. The Extracellular segment spans residues 23-241 (LEVSESPGSV…VISPQPRSIG (219 aa)). Intrachain disulfides connect Cys44–Cys120 and Cys165–Cys215. An N-linked (GlcNAc...) asparagine glycan is attached at Asn102. Positions 144–234 (PSAPHCQIQG…TCLLDLQVIS (91 aa)) constitute an Ig-like C2-type domain. Residues 242 to 262 (LIAGAIGTGAVIIIFCIALIL) form a helical membrane-spanning segment. Residues 263 to 437 (GAFFYWRSKN…PAQSRAGSLV (175 aa)) are Cytoplasmic-facing. At Arg379 the chain carries Omega-N-methylarginine. The segment at 382–405 (SLPAVSRSNGSVSRKARPPPVPSL) is disordered.

In terms of processing, N-glycosylated.

It is found in the cell membrane. Functions as a cell adhesion molecule through homophilic interaction. Stimulates cell growth. This chain is Immunoglobulin superfamily member 11 (IGSF11), found in Bos taurus (Bovine).